The chain runs to 166 residues: Cofilin-1 (166 aa).

The residue at position 2 (A2) is an N-acetylalanine. Phosphoserine occurs at positions 3 and 8. The region spanning 4-153 is the ADF-H domain; sequence GVAVSDGVIK…KDRCTLAEKL (150 aa). Position 13 is an N6-acetyllysine (K13). Position 25 is a phosphothreonine (T25). The Nuclear localization signal motif lies at 30–34; the sequence is KKRKK. S41 bears the Phosphoserine mark. A Phosphotyrosine modification is found at Y68. K73 is modified (N6-acetyllysine). A Glycyl lysine isopeptide (Lys-Gly) (interchain with G-Cter in SUMO2) cross-link involves residue K132. Phosphotyrosine is present on Y140. Residue K144 is modified to N6-acetyllysine. S156 is subject to Phosphoserine.

It belongs to the actin-binding proteins ADF family. Can bind G- and F-actin in a 1:1 ratio of cofilin to actin. It is a major component of intranuclear and cytoplasmic actin rods. Interacts with the subcortical maternal complex (SCMC) via interaction with TLE6 and NLRP5. Interacts with C9orf72. In terms of processing, inactivated by phosphorylation on Ser-3. Phosphorylated on Ser-3 in resting cells. Dephosphorylated by PDXP/chronophin; this restores its activity in promoting actin filament depolymerization. The phosphorylation of Ser-24 may prevent recognition of the nuclear localization signal. Phosphorylated via a ARRB1-RAC1-LIMK1-PAK1 cascade upon active ligand stimulation of atypical chemokine receptor ACKR2.

It localises to the nucleus matrix. Its subcellular location is the cytoplasm. It is found in the cytoskeleton. The protein localises to the cell projection. The protein resides in the ruffle membrane. It localises to the lamellipodium membrane. Its subcellular location is the lamellipodium. It is found in the growth cone. The protein localises to the axon. Functionally, binds to F-actin and exhibits pH-sensitive F-actin depolymerizing activity. Important for normal progress through mitosis and normal cytokinesis. In conjunction with the subcortical maternal complex (SCMC), plays an essential role for zygotes to progress beyond the first embryonic cell divisions via regulation of actin dynamics. Required for the centralization of the mitotic spindle and symmetric division of zygotes. Plays a role in the regulation of cell morphology and cytoskeletal organization in epithelial cells. Required for the up-regulation of atypical chemokine receptor ACKR2 from endosomal compartment to cell membrane, increasing its efficiency in chemokine uptake and degradation. Required for neural tube morphogenesis and neural crest cell migration. The protein is Cofilin-1 (Cfl1) of Rattus norvegicus (Rat).